The chain runs to 1307 residues: Cyclic nucleotide-gated channel beta-1 (1307 aa).

Disordered regions lie at residues 1–101, 126–178, 193–262, 320–458, 470–625, and 648–681; these read MLGW…AQVA, QPVY…TEPS, LPQP…PGDP, DSCW…LDSC, LERA…SQNS, and EKLIDPDVTSDEESPKPSPAKKAPDSAPAQKPAE. Over 1 to 720 the chain is Cytoplasmic; it reads MLGWVQRVLP…SIDPLTNLMY (720 aa). Acidic residues predominate over residues 43-59; the sequence is VQPEPEPEPEPAPEEAA. Over residues 165–174 the composition is skewed to basic and acidic residues; the sequence is GSDKTSKTQD. The span at 361-386 shows a compositional bias: acidic residues; it reads QEEEEEEKEEKEEKEEEEEKEEEEKR. A compositionally biased stretch (basic and acidic residues) spans 387–406; sequence EEEKKKEKEEEKKEKEKEEK. 2 stretches are compositionally biased toward acidic residues: residues 407–451 and 483–518; these read EEKE…EEEP and LPEEEEEKEEEKKEEEEEKEEEEEKEEEEEKEEEGE. Over residues 550–560 the composition is skewed to pro residues; sequence TIPPPERPPVS. Residues 621–631 form a calmodulin-binding CaM1 region; the sequence is ASQNSAIINDR. Residues 721 to 742 form a helical membrane-spanning segment; it reads ILWLFFVVLAWNWNCWLIPVRW. Residues 743 to 751 are Extracellular-facing; it reads AFPYQRADN. A helical transmembrane segment spans residues 752 to 773; sequence IHLWLLMDYLCDFIYLLDITVF. At 774 to 788 the chain is on the cytoplasmic side; sequence QMRLQFVKGGDIITD. Residues 789 to 808 form a helical membrane-spanning segment; it reads KKEMRNNYLKSQRFKMDLLC. Over 809–824 the chain is Extracellular; that stretch reads LLPLDFLYLKLGVNPL. A helical membrane pass occupies residues 825 to 837; it reads LRLPRCLKYMAFF. Topologically, residues 838 to 849 are cytoplasmic; the sequence is EFNNRLEAILSK. The helical transmembrane segment at 850 to 872 threads the bilayer; that stretch reads AYVYRVIRTTAYLLYSLHLNSCL. The tract at residues 850–949 is ion conduction pathway; the sequence is AYVYRVIRTT…IGQMRDVVGA (100 aa). Residues 873–895 are Extracellular-facing; sequence YYWASAFQGIGSTHWVYDGVGNS. Helical transmembrane passes span 896–922 and 923–948; these read YIRCYYWAVKTLITIGGLPDPQTLFEI and VFQLLNYFTGVFAFSVMIGQMRDVVG. Residues 949–1307 are Cytoplasmic-facing; that stretch reads AATAGQTYYR…MLEEKKEEVE (359 aa). The segment at 952 to 1028 is C-linker; it reads AGQTYYRSCM…NIVSKVALFQ (77 aa). The interval 1026-1130 is cNMP-binding domain; it reads LFQGCDRQMI…LDKKDLNEIL (105 aa). A cyclic nucleotide-binding domain region spans residues 1032–1148; the sequence is RQMIFDMLKR…LLRKKARRML (117 aa). G1093, E1094, S1096, R1106, and T1107 together coordinate 3',5'-cyclic GMP. R1106 serves as a coordination point for 3',5'-cyclic AMP. The interval 1212 to 1218 is calmodulin-binding CaM2; sequence QQQLLEQ. The span at 1214 to 1238 shows a compositional bias: low complexity; sequence QLLEQAKSSQEAGGEEGSGATDQPA. The disordered stretch occupies residues 1214–1307; it reads QLLEQAKSSQ…MLEEKKEEVE (94 aa). A compositionally biased stretch (pro residues) spans 1250 to 1261; that stretch reads EPPAPSSPPPAS.

Belongs to the cyclic nucleotide-gated cation channel (TC 1.A.1.5) family. CNGB1 subfamily. As to quaternary structure, the rod cyclic nucleotide-gated channel is a heterotetramer composed of CNGA1 and CNGB1 subunits with 3:1 stoichiometry. CNGA1:CNGB1 channel binds Ca(2+)-bound CALM1 via CaM1 and CaM2 regions of the CNGB1 subunit; this interaction modulates the affinity of the channel for cNMPs in response to intracellular Ca(2+) levels. The olfactory cyclic nucleotide-gated channel is a heterotetramer composed of CNGA2, CNGA4 and CNGB1b subunits with 2:1:1 stoichiometry. Expressed in olfactory sensory cilia (at protein level).

It localises to the cell projection. Its subcellular location is the cilium membrane. The catalysed reaction is Ca(2+)(in) = Ca(2+)(out). It catalyses the reaction Na(+)(in) = Na(+)(out). It carries out the reaction K(+)(in) = K(+)(out). The enzyme catalyses NH4(+)(in) = NH4(+)(out). The catalysed reaction is Rb(+)(in) = Rb(+)(out). It catalyses the reaction Li(+)(in) = Li(+)(out). It carries out the reaction Cs(+)(in) = Cs(+)(out). Its function is as follows. Pore-forming subunit of the rod cyclic nucleotide-gated channel. Mediates rod photoresponses at dim light converting transient changes in intracellular cGMP levels into electrical signals. In the dark, cGMP levels are high and keep the channel open enabling a steady inward current carried by Na(+) and Ca(2+) ions that leads to membrane depolarization and neurotransmitter release from synaptic terminals. Upon photon absorption cGMP levels decline leading to channel closure and membrane hyperpolarization that ultimately slows neurotransmitter release and signals the presence of light, the end point of the phototransduction cascade. Conducts cGMP- and cAMP-gated ion currents, with permeability for monovalent and divalent cations. The selectivity for Ca(2+) over Na(+) increases with cGMP concentrations, whereas the selectivity among monovalent ions is independent of the cGMP levels. In terms of biological role, pore-forming subunit of the olfactory cyclic nucleotide-gated channel. Operates in the cilia of olfactory sensory neurons where chemical stimulation of the odorant is converted to an electrical signal. Mediates odorant-induced cAMP-dependent Ca(2+) influx triggering neuron depolarization. The rise of intracellular Ca(2+) levels potentiates the olfactory response by activating Ca(2+)-dependent Cl(-) channels, but it also serves as a negative feedback signal to desensitize the channel for rapid adaptation to odorants. This Rattus norvegicus (Rat) protein is Cyclic nucleotide-gated channel beta-1.